The chain runs to 81 residues: Putative chemokine-related protein B42 (81 aa).

3 disulfides stabilise this stretch: cysteine 7/cysteine 73, cysteine 8/cysteine 29, and cysteine 11/cysteine 45.

Expressed in placenta, heart, lung, liver, pancreas, skeletal muscle and brain.

It localises to the cytoplasm. This is Putative chemokine-related protein B42 from Homo sapiens (Human).